The primary structure comprises 116 residues: Large ribosomal subunit protein eL18 (116 aa).

The protein belongs to the eukaryotic ribosomal protein eL18 family. Part of the 50S ribosomal subunit. Interacts weakly with proteins L4 and L15. Has been cross-linked to L4.

In terms of biological role, stabilizes the tertiary rRNA structure within the 23S rRNA domain (domain II) to which it binds. The protein is Large ribosomal subunit protein eL18 (rpl18e) of Haloarcula marismortui (strain ATCC 43049 / DSM 3752 / JCM 8966 / VKM B-1809) (Halobacterium marismortui).